The chain runs to 1243 residues: Inositol hexakisphosphate and diphosphoinositol-pentakisphosphate kinase 2 (1243 aa).

The residue at position 38 (Ser38) is a Phosphoserine. 53–54 (KK) provides a ligand contact to substrate. Residues Arg134, Lys187, His194, and Arg213 each coordinate ATP. 213–214 (RK) lines the substrate pocket. The residue at position 223 (Ser223) is a Phosphoserine. ATP is bound by residues 237 to 240 (EEFM) and 246 to 248 (DVK). Residues Lys248 and Arg262 each coordinate substrate. Residues Ser264, Asp309, and 321-323 (DVN) contribute to the ATP site. A substrate-binding site is contributed by 326-329 (SFVK). The polyphosphoinositide-binding domain stretch occupies residues 371–442 (PTTSGTMMEL…VLDIARQLLM (72 aa)). 2 disordered regions span residues 898–941 (KGCE…RDEV) and 957–1016 (HIHR…SPVS). Residues 915–941 (ASRENEGRRPFKIDNDDEPHTSKRDEV) are compositionally biased toward basic and acidic residues. Residues 958 to 969 (IHRKSPLPRSRK) show a composition bias toward basic residues. Residues Ser1006, Ser1016, Ser1074, Ser1091, Ser1165, Ser1172, and Ser1180 each carry the phosphoserine modification. Residues 1185-1243 (TPAKILPTPPATLKSTKASSKPATSGPSSAVVPNTSSRKKNITSKTETHEHKKNTGKKK) are disordered. The segment covering 1195–1209 (ATLKSTKASSKPATS) has biased composition (low complexity). Positions 1210-1220 (GPSSAVVPNTS) are enriched in polar residues. Phosphoserine occurs at positions 1220 and 1221.

Belongs to the histidine acid phosphatase family. VIP1 subfamily.

The protein localises to the cytoplasm. The protein resides in the cytosol. The enzyme catalyses 1D-myo-inositol hexakisphosphate + ATP = 1-diphospho-1D-myo-inositol 2,3,4,5,6-pentakisphosphate + ADP. The catalysed reaction is 5-diphospho-1D-myo-inositol 1,2,3,4,6-pentakisphosphate + ATP + H(+) = 1,5-bis(diphospho)-1D-myo-inositol 2,3,4,6-tetrakisphosphate + ADP. Functionally, bifunctional inositol kinase that acts in concert with the IP6K kinases IP6K1, IP6K2 and IP6K3 to synthesize the diphosphate group-containing inositol pyrophosphates diphosphoinositol pentakisphosphate, PP-InsP5, and bis-diphosphoinositol tetrakisphosphate, (PP)2-InsP4. PP-InsP5 and (PP)2-InsP4, also respectively called InsP7 and InsP8, regulate a variety of cellular processes, including apoptosis, vesicle trafficking, cytoskeletal dynamics, exocytosis, insulin signaling and neutrophil activation. Phosphorylates inositol hexakisphosphate (InsP6) at position 1 to produce PP-InsP5 which is in turn phosphorylated by IP6Ks to produce (PP)2-InsP4. Alternatively, phosphorylates PP-InsP5 at position 1, produced by IP6Ks from InsP6, to produce (PP)2-InsP4. Required for normal hearing. This is Inositol hexakisphosphate and diphosphoinositol-pentakisphosphate kinase 2 from Homo sapiens (Human).